Here is a 300-residue protein sequence, read N- to C-terminus: Ribonuclease HIII (300 aa).

Residues 83-300 form the RNase H type-2 domain; sequence IPIIGSDEVG…THKAQALLTK (218 aa). Residues aspartate 89, glutamate 90, and aspartate 194 each contribute to the a divalent metal cation site.

The protein belongs to the RNase HII family. RnhC subfamily. Mn(2+) serves as cofactor. The cofactor is Mg(2+).

The protein resides in the cytoplasm. It carries out the reaction Endonucleolytic cleavage to 5'-phosphomonoester.. Endonuclease that specifically degrades the RNA of RNA-DNA hybrids. The polypeptide is Ribonuclease HIII (Streptococcus pyogenes serotype M2 (strain MGAS10270)).